Consider the following 156-residue polypeptide: Endoribonuclease YbeY (156 aa).

Positions 122, 126, and 132 each coordinate Zn(2+).

It belongs to the endoribonuclease YbeY family. The cofactor is Zn(2+).

The protein resides in the cytoplasm. Functionally, single strand-specific metallo-endoribonuclease involved in late-stage 70S ribosome quality control and in maturation of the 3' terminus of the 16S rRNA. The polypeptide is Endoribonuclease YbeY (Geobacillus sp. (strain WCH70)).